Here is a 394-residue protein sequence, read N- to C-terminus: NAD(P)H-quinone oxidoreductase subunit H (394 aa).

The protein belongs to the complex I 49 kDa subunit family. As to quaternary structure, NDH-1 can be composed of about 15 different subunits; different subcomplexes with different compositions have been identified which probably have different functions.

The protein localises to the cellular thylakoid membrane. The catalysed reaction is a plastoquinone + NADH + (n+1) H(+)(in) = a plastoquinol + NAD(+) + n H(+)(out). It catalyses the reaction a plastoquinone + NADPH + (n+1) H(+)(in) = a plastoquinol + NADP(+) + n H(+)(out). Its function is as follows. NDH-1 shuttles electrons from an unknown electron donor, via FMN and iron-sulfur (Fe-S) centers, to quinones in the respiratory and/or the photosynthetic chain. The immediate electron acceptor for the enzyme in this species is believed to be plastoquinone. Couples the redox reaction to proton translocation, and thus conserves the redox energy in a proton gradient. Cyanobacterial NDH-1 also plays a role in inorganic carbon-concentration. The protein is NAD(P)H-quinone oxidoreductase subunit H of Synechococcus sp. (strain CC9605).